The chain runs to 890 residues: Translation initiation factor IF-2 (890 aa).

A disordered region spans residues 110 to 216 (ISKPISKAPQ…KKPLIKTQDH (107 aa)). Residues 135 to 148 (VPKRKGLVIIKKKR) are compositionally biased toward basic residues. Over residues 184–199 (KSYNEPKNKENDDIKK) the composition is skewed to basic and acidic residues. Positions 200–210 (QKVKKEKKKPL) are enriched in basic residues. The tr-type G domain maps to 387–554 (TRPPVVTIMG…NILLQAEILE (168 aa)). The interval 396–403 (GHVDHGKT) is G1. A GTP-binding site is contributed by 396–403 (GHVDHGKT). Residues 421-425 (GITQH) are G2. Positions 442 to 445 (DTPG) are G3. Residues 442-446 (DTPGH) and 496-499 (NKMD) each bind GTP. The segment at 496-499 (NKMD) is G4. Residues 532 to 534 (SAR) form a G5 region.

It belongs to the TRAFAC class translation factor GTPase superfamily. Classic translation factor GTPase family. IF-2 subfamily.

The protein localises to the cytoplasm. In terms of biological role, one of the essential components for the initiation of protein synthesis. Protects formylmethionyl-tRNA from spontaneous hydrolysis and promotes its binding to the 30S ribosomal subunits. Also involved in the hydrolysis of GTP during the formation of the 70S ribosomal complex. The polypeptide is Translation initiation factor IF-2 (Aliarcobacter butzleri (strain RM4018) (Arcobacter butzleri)).